A 483-amino-acid chain; its full sequence is Glutamyl-tRNA(Gln) amidotransferase subunit A (483 aa).

Active-site charge relay system residues include lysine 76 and serine 151. The active-site Acyl-ester intermediate is the serine 175.

This sequence belongs to the amidase family. GatA subfamily. As to quaternary structure, heterotrimer of A, B and C subunits.

The catalysed reaction is L-glutamyl-tRNA(Gln) + L-glutamine + ATP + H2O = L-glutaminyl-tRNA(Gln) + L-glutamate + ADP + phosphate + H(+). Its function is as follows. Allows the formation of correctly charged Gln-tRNA(Gln) through the transamidation of misacylated Glu-tRNA(Gln) in organisms which lack glutaminyl-tRNA synthetase. The reaction takes place in the presence of glutamine and ATP through an activated gamma-phospho-Glu-tRNA(Gln). In Pseudomonas entomophila (strain L48), this protein is Glutamyl-tRNA(Gln) amidotransferase subunit A.